Here is a 126-residue protein sequence, read N- to C-terminus: Aspartate 1-decarboxylase (126 aa).

The active-site Schiff-base intermediate with substrate; via pyruvic acid is serine 25. Serine 25 bears the Pyruvic acid (Ser) mark. Substrate is bound at residue threonine 57. Catalysis depends on tyrosine 58, which acts as the Proton donor. 73–75 (GAA) is a substrate binding site.

This sequence belongs to the PanD family. Heterooctamer of four alpha and four beta subunits. Pyruvate is required as a cofactor. Post-translationally, is synthesized initially as an inactive proenzyme, which is activated by self-cleavage at a specific serine bond to produce a beta-subunit with a hydroxyl group at its C-terminus and an alpha-subunit with a pyruvoyl group at its N-terminus.

The protein localises to the cytoplasm. It catalyses the reaction L-aspartate + H(+) = beta-alanine + CO2. The protein operates within cofactor biosynthesis; (R)-pantothenate biosynthesis; beta-alanine from L-aspartate: step 1/1. In terms of biological role, catalyzes the pyruvoyl-dependent decarboxylation of aspartate to produce beta-alanine. This is Aspartate 1-decarboxylase from Erwinia tasmaniensis (strain DSM 17950 / CFBP 7177 / CIP 109463 / NCPPB 4357 / Et1/99).